We begin with the raw amino-acid sequence, 216 residues long: Flagellin B2 (216 aa).

A propeptide spanning residues 1–12 is cleaved from the precursor; that stretch reads MKIKEFMSNKKG. N-linked (GlcNAc...) asparagine glycosylation is found at N38, N72, N77, N113, N172, and N208.

This sequence belongs to the archaeal flagellin family. Post-translationally, N-linked glycans consist of the 779 Da trisaccharide beta-ManNAc(Thr)-(1-4)-beta-GlcNAc3NAcA-(1-3)-beta-GlcNAc.

It localises to the archaeal flagellum. Functionally, flagellin is the subunit protein which polymerizes to form the filaments of archaeal flagella. This is Flagellin B2 (flaB2) from Methanococcus voltae.